A 660-amino-acid chain; its full sequence is Bifunctional polymyxin resistance protein ArnA (660 aa).

Residues 1 to 304 (MKTVVFAYHD…TLGLVQGSRL (304 aa)) are formyltransferase ArnAFT. 86–88 (HLI) contributes to the (6R)-10-formyltetrahydrofolate binding site. The Proton donor; for formyltransferase activity role is filled by histidine 104. (6R)-10-formyltetrahydrofolate is bound by residues arginine 114 and 136-140 (VKRAD). Residues 314-660 (RRTRVLILGV…RTVDLTDKPS (347 aa)) form a dehydrogenase ArnADH region. Residues aspartate 347 and 368 to 369 (DI) contribute to the NAD(+) site. Residues alanine 393, tyrosine 398, and 432–433 (TS) each bind UDP-alpha-D-glucuronate. Glutamate 434 (proton acceptor; for decarboxylase activity) is an active-site residue. Residues arginine 460, asparagine 492, 526 to 535 (KLIDGGKQKR), and tyrosine 613 each bind UDP-alpha-D-glucuronate. Residue arginine 619 is the Proton donor; for decarboxylase activity of the active site.

In the N-terminal section; belongs to the Fmt family. UDP-L-Ara4N formyltransferase subfamily. This sequence in the C-terminal section; belongs to the NAD(P)-dependent epimerase/dehydratase family. UDP-glucuronic acid decarboxylase subfamily. Homohexamer, formed by a dimer of trimers.

It carries out the reaction UDP-alpha-D-glucuronate + NAD(+) = UDP-beta-L-threo-pentopyranos-4-ulose + CO2 + NADH. The catalysed reaction is UDP-4-amino-4-deoxy-beta-L-arabinose + (6R)-10-formyltetrahydrofolate = UDP-4-deoxy-4-formamido-beta-L-arabinose + (6S)-5,6,7,8-tetrahydrofolate + H(+). It functions in the pathway nucleotide-sugar biosynthesis; UDP-4-deoxy-4-formamido-beta-L-arabinose biosynthesis; UDP-4-deoxy-4-formamido-beta-L-arabinose from UDP-alpha-D-glucuronate: step 1/3. It participates in nucleotide-sugar biosynthesis; UDP-4-deoxy-4-formamido-beta-L-arabinose biosynthesis; UDP-4-deoxy-4-formamido-beta-L-arabinose from UDP-alpha-D-glucuronate: step 3/3. The protein operates within bacterial outer membrane biogenesis; lipopolysaccharide biosynthesis. In terms of biological role, bifunctional enzyme that catalyzes the oxidative decarboxylation of UDP-glucuronic acid (UDP-GlcUA) to UDP-4-keto-arabinose (UDP-Ara4O) and the addition of a formyl group to UDP-4-amino-4-deoxy-L-arabinose (UDP-L-Ara4N) to form UDP-L-4-formamido-arabinose (UDP-L-Ara4FN). The modified arabinose is attached to lipid A and is required for resistance to polymyxin and cationic antimicrobial peptides. The sequence is that of Bifunctional polymyxin resistance protein ArnA from Escherichia coli O127:H6 (strain E2348/69 / EPEC).